We begin with the raw amino-acid sequence, 118 residues long: MTALTQAHCEACRADAPHVSDEELPVLLRQIPDWNIEVRDGIMQLEKVYLFKNFRHALAFTNAIGEISEAEGHHPGLLTEWGKVTVTWWSHSIKGLHRNDFIMAARTDEVAKTAEGRK.

This sequence belongs to the pterin-4-alpha-carbinolamine dehydratase family.

The enzyme catalyses (4aS,6R)-4a-hydroxy-L-erythro-5,6,7,8-tetrahydrobiopterin = (6R)-L-erythro-6,7-dihydrobiopterin + H2O. This Pseudomonas paraeruginosa (strain DSM 24068 / PA7) (Pseudomonas aeruginosa (strain PA7)) protein is Putative pterin-4-alpha-carbinolamine dehydratase.